Here is a 463-residue protein sequence, read N- to C-terminus: Adenosylhomocysteinase (463 aa).

Positions 54, 128, and 189 each coordinate substrate. An NAD(+)-binding site is contributed by 190 to 192 (TTT). The substrate site is built by Lys-219 and Asp-223. NAD(+) is bound by residues Asn-224, 253–258 (GYGDVG), Glu-276, Asn-311, 332–334 (IGH), and Asn-377.

This sequence belongs to the adenosylhomocysteinase family. Requires NAD(+) as cofactor.

The protein resides in the cytoplasm. The catalysed reaction is S-adenosyl-L-homocysteine + H2O = L-homocysteine + adenosine. It participates in amino-acid biosynthesis; L-homocysteine biosynthesis; L-homocysteine from S-adenosyl-L-homocysteine: step 1/1. In terms of biological role, may play a key role in the regulation of the intracellular concentration of adenosylhomocysteine. In Cereibacter sphaeroides (Rhodobacter sphaeroides), this protein is Adenosylhomocysteinase.